The following is a 456-amino-acid chain: Serine/threonine-protein kinase PBS1 (456 aa).

The tract at residues 1–57 (MGCFSCFDSSDDEKLNPVDESNHGQKKQSQPTVSNNISGLPSGGEKLSSKTNGGSKR) is disordered. A lipid anchor (N-myristoyl glycine) is attached at glycine 2. S-palmitoyl cysteine attachment occurs at residues cysteine 3 and cysteine 6. The span at 12–23 (DEKLNPVDESNH) shows a compositional bias: basic and acidic residues. Position 21 is a phosphoserine (serine 21). Residues 27 to 39 (KQSQPTVSNNISG) are compositionally biased toward polar residues. A Protein kinase domain is found at 86-363 (FHPDTFLGEG…ADVVTALSYL (278 aa)). Residues 92–100 (LGEGGFGRV) and lysine 115 contribute to the ATP site. Tyrosine 160 is subject to Phosphotyrosine. Aspartate 213 (proton acceptor) is an active-site residue. Serine 217 and serine 247 each carry phosphoserine. Phosphothreonine is present on residues threonine 248 and threonine 253. Tyrosine 261 is subject to Phosphotyrosine. The Recognition motif required for RPS5-mediated plant resistance to P.syringae signature appears at 292–296 (SEMPH). A disordered region spans residues 368–456 (YDPSKDDSRR…QGTSESNSTG (89 aa)). 2 stretches are compositionally biased toward basic and acidic residues: residues 370-392 (PSKD…RNDD) and 400-429 (FDLE…RAVA). A compositionally biased stretch (polar residues) spans 446–456 (EQGTSESNSTG).

The protein belongs to the protein kinase superfamily. Ser/Thr protein kinase family. In terms of assembly, in infected plant cells, it interacts with the P.syringae virulence protein avrPphB. In uninfected plants, autophosphorylated form interacts with RPS5. Interacts with FLS2. Cleaved by avrPphB in infected plant cells. Its cleavage serves as a signal that triggers the RPS5-mediated defense system. In terms of processing, autophosphorylates. Autophosphorylation may be required to trigger the RPS5-mediated plant defense system. Post-translationally, palmitoylation at Cys-3 and Cys-6 are required for plasma membrane location that is essential for the RPS5-mediated plant defense response.

It is found in the cell membrane. The enzyme catalyses L-seryl-[protein] + ATP = O-phospho-L-seryl-[protein] + ADP + H(+). It carries out the reaction L-threonyl-[protein] + ATP = O-phospho-L-threonyl-[protein] + ADP + H(+). In terms of biological role, protein kinase required for plant defense mechanism mediated by the disease resistance (R) protein RPS5. In case of infection by Pseudomonas syringae, AvrPphB triggers RPS5-mediated defense mechanism via the cleavage of PBS1. Both kinase activity and cleavage by avrPphB are independently required to trigger the RPS5-mediated resistance. Contributes to PAMP-triggered immunity (PTI) signaling and defense responses downstream of FLS2. This is Serine/threonine-protein kinase PBS1 from Arabidopsis thaliana (Mouse-ear cress).